The following is a 520-amino-acid chain: 2-isopropylmalate synthase (520 aa).

The Pyruvate carboxyltransferase domain maps to 12–274; that stretch reads VIIFDTTLRD…WNKIDTTQLT (263 aa). Positions 21, 209, 211, and 245 each coordinate Mn(2+). The regulatory domain stretch occupies residues 398–520; the sequence is KLTSLTVIAG…RDTVTTAAAS (123 aa).

It belongs to the alpha-IPM synthase/homocitrate synthase family. LeuA type 1 subfamily. Homodimer. Requires Mn(2+) as cofactor.

The protein resides in the cytoplasm. The enzyme catalyses 3-methyl-2-oxobutanoate + acetyl-CoA + H2O = (2S)-2-isopropylmalate + CoA + H(+). Its pathway is amino-acid biosynthesis; L-leucine biosynthesis; L-leucine from 3-methyl-2-oxobutanoate: step 1/4. Functionally, catalyzes the condensation of the acetyl group of acetyl-CoA with 3-methyl-2-oxobutanoate (2-ketoisovalerate) to form 3-carboxy-3-hydroxy-4-methylpentanoate (2-isopropylmalate). This chain is 2-isopropylmalate synthase, found in Bradyrhizobium diazoefficiens (strain JCM 10833 / BCRC 13528 / IAM 13628 / NBRC 14792 / USDA 110).